The chain runs to 87 residues: Small ribosomal subunit protein bS20 (87 aa).

It belongs to the bacterial ribosomal protein bS20 family.

Functionally, binds directly to 16S ribosomal RNA. The protein is Small ribosomal subunit protein bS20 of Corynebacterium diphtheriae (strain ATCC 700971 / NCTC 13129 / Biotype gravis).